Reading from the N-terminus, the 251-residue chain is Ditrans,polycis-undecaprenyl-diphosphate synthase ((2E,6E)-farnesyl-diphosphate specific) (251 aa).

Asp-21 is an active-site residue. Residue Asp-21 participates in Mg(2+) binding. Substrate is bound by residues 22-25 (GNNR), Trp-26, His-38, and 66-68 (SSE). The active-site Proton acceptor is the Asn-69. Substrate contacts are provided by residues Trp-70, Arg-72, Arg-189, and 195-197 (RIS). Glu-208 is a binding site for Mg(2+).

The protein belongs to the UPP synthase family. In terms of assembly, homodimer. The cofactor is Mg(2+).

It catalyses the reaction 8 isopentenyl diphosphate + (2E,6E)-farnesyl diphosphate = di-trans,octa-cis-undecaprenyl diphosphate + 8 diphosphate. Its function is as follows. Catalyzes the sequential condensation of isopentenyl diphosphate (IPP) with (2E,6E)-farnesyl diphosphate (E,E-FPP) to yield (2Z,6Z,10Z,14Z,18Z,22Z,26Z,30Z,34E,38E)-undecaprenyl diphosphate (di-trans,octa-cis-UPP). UPP is the precursor of glycosyl carrier lipid in the biosynthesis of bacterial cell wall polysaccharide components such as peptidoglycan and lipopolysaccharide. The protein is Ditrans,polycis-undecaprenyl-diphosphate synthase ((2E,6E)-farnesyl-diphosphate specific) of Pseudomonas syringae pv. tomato (strain ATCC BAA-871 / DC3000).